A 279-amino-acid chain; its full sequence is Tryptophan 2,3-dioxygenase (279 aa).

Substrate is bound by residues 48–52 (FIVIH), tyrosine 110, and arginine 114. Histidine 237 lines the heme pocket. Threonine 251 is a binding site for substrate.

The protein belongs to the tryptophan 2,3-dioxygenase family. Homotetramer. The cofactor is heme.

It catalyses the reaction L-tryptophan + O2 = N-formyl-L-kynurenine. Its pathway is amino-acid degradation; L-tryptophan degradation via kynurenine pathway; L-kynurenine from L-tryptophan: step 1/2. Its function is as follows. Heme-dependent dioxygenase that catalyzes the oxidative cleavage of the L-tryptophan (L-Trp) pyrrole ring and converts L-tryptophan to N-formyl-L-kynurenine. Catalyzes the oxidative cleavage of the indole moiety. The polypeptide is Tryptophan 2,3-dioxygenase (Bacillus thuringiensis subsp. konkukian (strain 97-27)).